Here is an 81-residue protein sequence, read N- to C-terminus: Large ribosomal subunit protein bL31 (81 aa).

Cys16, Cys18, Cys38, and Cys41 together coordinate Zn(2+).

It belongs to the bacterial ribosomal protein bL31 family. Type A subfamily. In terms of assembly, part of the 50S ribosomal subunit. Zn(2+) is required as a cofactor.

Functionally, binds the 23S rRNA. This Mycobacterium marinum (strain ATCC BAA-535 / M) protein is Large ribosomal subunit protein bL31.